We begin with the raw amino-acid sequence, 106 residues long: UPF0145 protein CPE0882 (106 aa).

It belongs to the UPF0145 family.

This Clostridium perfringens (strain 13 / Type A) protein is UPF0145 protein CPE0882.